Here is a 304-residue protein sequence, read N- to C-terminus: Oxygen-dependent coproporphyrinogen-III oxidase (304 aa).

S93 provides a ligand contact to substrate. A divalent metal cation contacts are provided by H97 and H107. H107 (proton donor) is an active-site residue. Residue N109–R111 participates in substrate binding. The a divalent metal cation site is built by H146 and H176. The tract at residues Y241–G276 is important for dimerization. Residue G259–R261 participates in substrate binding.

This sequence belongs to the aerobic coproporphyrinogen-III oxidase family. In terms of assembly, homodimer. A divalent metal cation serves as cofactor.

The protein localises to the cytoplasm. The enzyme catalyses coproporphyrinogen III + O2 + 2 H(+) = protoporphyrinogen IX + 2 CO2 + 2 H2O. It functions in the pathway porphyrin-containing compound metabolism; protoporphyrin-IX biosynthesis; protoporphyrinogen-IX from coproporphyrinogen-III (O2 route): step 1/1. Its function is as follows. Involved in the heme biosynthesis. Catalyzes the aerobic oxidative decarboxylation of propionate groups of rings A and B of coproporphyrinogen-III to yield the vinyl groups in protoporphyrinogen-IX. The chain is Oxygen-dependent coproporphyrinogen-III oxidase from Pseudomonas syringae pv. syringae (strain B728a).